Reading from the N-terminus, the 342-residue chain is Dihydroorotate dehydrogenase (quinone) (342 aa).

FMN-binding positions include 61 to 65 and Thr85; that span reads AGLDK. Residue Lys65 participates in substrate binding. 110 to 114 contacts substrate; sequence NRMGF. FMN is bound by residues Asn138 and Asn171. Residue Asn171 participates in substrate binding. The active-site Nucleophile is the Ser174. A substrate-binding site is contributed by Asn176. FMN-binding residues include Lys216 and Thr244. 245–246 is a substrate binding site; it reads NT. FMN is bound by residues Gly267, Gly296, and 317 to 318; that span reads YS.

It belongs to the dihydroorotate dehydrogenase family. Type 2 subfamily. Monomer. The cofactor is FMN.

Its subcellular location is the cell membrane. The catalysed reaction is (S)-dihydroorotate + a quinone = orotate + a quinol. The protein operates within pyrimidine metabolism; UMP biosynthesis via de novo pathway; orotate from (S)-dihydroorotate (quinone route): step 1/1. Functionally, catalyzes the conversion of dihydroorotate to orotate with quinone as electron acceptor. This Pseudomonas aeruginosa (strain LESB58) protein is Dihydroorotate dehydrogenase (quinone).